The chain runs to 155 residues: Aspartate carbamoyltransferase regulatory chain (155 aa).

The Zn(2+) site is built by C110, C115, C139, and C142.

The protein belongs to the PyrI family. In terms of assembly, contains catalytic and regulatory chains. It depends on Zn(2+) as a cofactor.

Its function is as follows. Involved in allosteric regulation of aspartate carbamoyltransferase. This is Aspartate carbamoyltransferase regulatory chain from Yersinia pseudotuberculosis serotype IB (strain PB1/+).